The chain runs to 191 residues: Ribosome maturation factor RimM (191 aa).

The region spanning 102 to 185 (EEEYHVSQLI…RIEINPPKGL (84 aa)) is the PRC barrel domain.

It belongs to the RimM family. Binds ribosomal protein uS19.

Its subcellular location is the cytoplasm. Functionally, an accessory protein needed during the final step in the assembly of 30S ribosomal subunit, possibly for assembly of the head region. Essential for efficient processing of 16S rRNA. May be needed both before and after RbfA during the maturation of 16S rRNA. It has affinity for free ribosomal 30S subunits but not for 70S ribosomes. The protein is Ribosome maturation factor RimM of Crocosphaera subtropica (strain ATCC 51142 / BH68) (Cyanothece sp. (strain ATCC 51142)).